The chain runs to 445 residues: Chromosomal replication initiator protein DnaA (445 aa).

Residues 1–72 (MSGIDTIWEK…QEAFIEEIGE (72 aa)) form a domain I, interacts with DnaA modulators region. The domain II stretch occupies residues 72 to 107 (EKLNIKVISSEDELMNNEKEAPVRKTQQTSQELLPN). The interval 108–324 (QLNTDNTFDT…GALTRVSAYS (217 aa)) is domain III, AAA+ region. Residues glycine 152, glycine 154, lysine 155, and threonine 156 each coordinate ATP. Positions 325-445 (KLVNRELNSD…LKNIEKDITS (121 aa)) are domain IV, binds dsDNA.

The protein belongs to the DnaA family. Oligomerizes as a right-handed, spiral filament on DNA at oriC.

Its subcellular location is the cytoplasm. Its function is as follows. Plays an essential role in the initiation and regulation of chromosomal replication. ATP-DnaA binds to the origin of replication (oriC) to initiate formation of the DNA replication initiation complex once per cell cycle. Binds the DnaA box (a 9 base pair repeat at the origin) and separates the double-stranded (ds)DNA. Forms a right-handed helical filament on oriC DNA; dsDNA binds to the exterior of the filament while single-stranded (ss)DNA is stabiized in the filament's interior. The ATP-DnaA-oriC complex binds and stabilizes one strand of the AT-rich DNA unwinding element (DUE), permitting loading of DNA polymerase. After initiation quickly degrades to an ADP-DnaA complex that is not apt for DNA replication. Binds acidic phospholipids. The polypeptide is Chromosomal replication initiator protein DnaA (Macrococcus caseolyticus (strain JCSC5402) (Macrococcoides caseolyticum)).